The primary structure comprises 376 residues: Pregnancy-associated glycoprotein 2 (376 aa).

The first 15 residues, 1–15, serve as a signal peptide directing secretion; sequence MKWLVLLGLVALSEC. N-linked (GlcNAc...) asparagine glycosylation is found at N51 and N71. The 306-residue stretch at 68–373 folds into the Peptidase A1 domain; the sequence is YVGNITIGTP…DRKNRRIGLA (306 aa). D86 is an active-site residue. Residues C99 and C104 are joined by a disulfide bond. N-linked (GlcNAc...) asparagine glycosylation is found at N114, N248, and N252. A disulfide bridge connects residues C258 and C262. The active site involves D267. Residues C300 and C333 are joined by a disulfide bond. N343 carries an N-linked (GlcNAc...) asparagine glycan.

It belongs to the peptidase A1 family. Post-translationally, N-Glycosylated; the glycans terminate in either N-acetyl-galactosamine (GalNAc) or N-acetyllactosamine. Terminal GalNAc on Asn-linked glycans is greatly reduced prior to parturition while lactosamine-type N-glycans remain unaltered. In terms of tissue distribution, trophoblast and placental tissue. Localized to both the mononucleate and binucleate cells of the trophectoderm.

It is found in the secreted. The protein localises to the extracellular space. Functionally, PAG2 or a processed derivative of this molecule might represent a factor that binds the LH receptor. The protein is Pregnancy-associated glycoprotein 2 (PAG2) of Bos taurus (Bovine).